Reading from the N-terminus, the 137-residue chain is Large ribosomal subunit protein uL16 (137 aa).

This sequence belongs to the universal ribosomal protein uL16 family. In terms of assembly, part of the 50S ribosomal subunit.

In terms of biological role, binds 23S rRNA and is also seen to make contacts with the A and possibly P site tRNAs. The sequence is that of Large ribosomal subunit protein uL16 from Bartonella tribocorum (strain CIP 105476 / IBS 506).